A 227-amino-acid polypeptide reads, in one-letter code: Transcription antitermination protein NusB (227 aa).

2 disordered regions span residues 165–189 (ASESLDDAPVAPWDDSDALDDSDED) and 201–227 (AEETVEVSEVAEDSEVSKVSEEKADES). Acidic residues-rich tracts occupy residues 178–189 (DDSDALDDSDED) and 201–214 (AEETVEVSEVAEDS). A compositionally biased stretch (basic and acidic residues) spans 215–227 (EVSKVSEEKADES).

Belongs to the NusB family.

Functionally, involved in transcription antitermination. Required for transcription of ribosomal RNA (rRNA) genes. Binds specifically to the boxA antiterminator sequence of the ribosomal RNA (rrn) operons. The protein is Transcription antitermination protein NusB of Corynebacterium glutamicum (strain ATCC 13032 / DSM 20300 / JCM 1318 / BCRC 11384 / CCUG 27702 / LMG 3730 / NBRC 12168 / NCIMB 10025 / NRRL B-2784 / 534).